A 102-amino-acid chain; its full sequence is MDSSKIRIRLKSYDYRMLDISAAEIVETARRTGARVCGPIPLPTKIERFTVLRSPHVDKNARDQFEQRTHKRLLDILDPNDKTVDALIKLDLAAGVDVEIKL.

This sequence belongs to the universal ribosomal protein uS10 family. Part of the 30S ribosomal subunit.

Involved in the binding of tRNA to the ribosomes. The chain is Small ribosomal subunit protein uS10 from Acidithiobacillus ferrooxidans (strain ATCC 53993 / BNL-5-31) (Leptospirillum ferrooxidans (ATCC 53993)).